The primary structure comprises 327 residues: Probable cell division protein WhiA (327 aa).

The H-T-H motif DNA-binding region spans 275–308 (SLEELGRLADPVMTKDAVAGRIRRLLSMADRKAK). Residues 307–327 (AKTEGIPDTESAVTPELLEEA) are disordered.

The protein belongs to the WhiA family.

Functionally, involved in cell division and chromosome segregation. In Mycobacteroides abscessus (strain ATCC 19977 / DSM 44196 / CCUG 20993 / CIP 104536 / JCM 13569 / NCTC 13031 / TMC 1543 / L948) (Mycobacterium abscessus), this protein is Probable cell division protein WhiA.